Consider the following 383-residue polypeptide: Succinyl-diaminopimelate desuccinylase (383 aa).

Histidine 72 lines the Zn(2+) pocket. Aspartate 74 is a catalytic residue. Aspartate 105 provides a ligand contact to Zn(2+). The Proton acceptor role is filled by glutamate 139. The Zn(2+) site is built by glutamate 140, glutamate 168, and histidine 356.

It belongs to the peptidase M20A family. DapE subfamily. In terms of assembly, homodimer. Requires Zn(2+) as cofactor. The cofactor is Co(2+).

It carries out the reaction N-succinyl-(2S,6S)-2,6-diaminopimelate + H2O = (2S,6S)-2,6-diaminopimelate + succinate. The protein operates within amino-acid biosynthesis; L-lysine biosynthesis via DAP pathway; LL-2,6-diaminopimelate from (S)-tetrahydrodipicolinate (succinylase route): step 3/3. Functionally, catalyzes the hydrolysis of N-succinyl-L,L-diaminopimelic acid (SDAP), forming succinate and LL-2,6-diaminopimelate (DAP), an intermediate involved in the bacterial biosynthesis of lysine and meso-diaminopimelic acid, an essential component of bacterial cell walls. In Beijerinckia indica subsp. indica (strain ATCC 9039 / DSM 1715 / NCIMB 8712), this protein is Succinyl-diaminopimelate desuccinylase.